The sequence spans 916 residues: Protein translocase subunit SecA (916 aa).

Residues glutamine 86, glycine 104–threonine 108, and aspartate 494 each bind ATP. A disordered region spans residues leucine 859–arginine 916. Over residues glutamine 880 to serine 891 the composition is skewed to polar residues. Residues alanine 898 to lysine 908 are compositionally biased toward basic and acidic residues.

The protein belongs to the SecA family. In terms of assembly, monomer and homodimer. Part of the essential Sec protein translocation apparatus which comprises SecA, SecYEG and auxiliary proteins SecDF. Other proteins may also be involved.

The protein localises to the cell membrane. Its subcellular location is the cytoplasm. The catalysed reaction is ATP + H2O + cellular proteinSide 1 = ADP + phosphate + cellular proteinSide 2.. In terms of biological role, part of the Sec protein translocase complex. Interacts with the SecYEG preprotein conducting channel. Has a central role in coupling the hydrolysis of ATP to the transfer of proteins into and across the cell membrane, serving as an ATP-driven molecular motor driving the stepwise translocation of polypeptide chains across the membrane. This is Protein translocase subunit SecA from Pseudarthrobacter chlorophenolicus (strain ATCC 700700 / DSM 12829 / CIP 107037 / JCM 12360 / KCTC 9906 / NCIMB 13794 / A6) (Arthrobacter chlorophenolicus).